Reading from the N-terminus, the 433-residue chain is Serine hydroxymethyltransferase (433 aa).

Position 121-123 (121-123 (AHV)) interacts with (6S)-5,6,7,8-tetrahydrofolate. At Lys227 the chain carries N6-(pyridoxal phosphate)lysine. Glu243 serves as a coordination point for (6S)-5,6,7,8-tetrahydrofolate.

It belongs to the SHMT family. In terms of assembly, homodimer. Requires pyridoxal 5'-phosphate as cofactor.

It is found in the cytoplasm. Its pathway is amino-acid biosynthesis; glycine biosynthesis; glycine from L-serine: step 1/1. Catalyzes the reversible interconversion of serine and glycine with a modified folate serving as the one-carbon carrier. Also exhibits a pteridine-independent aldolase activity toward beta-hydroxyamino acids, producing glycine and aldehydes, via a retro-aldol mechanism. The protein is Serine hydroxymethyltransferase of Saccharolobus islandicus (strain Y.G.57.14 / Yellowstone #1) (Sulfolobus islandicus).